The chain runs to 273 residues: tRNA pseudouridine synthase B (273 aa).

The Nucleophile role is filled by Asp38.

The protein belongs to the pseudouridine synthase TruB family. Type 1 subfamily.

It carries out the reaction uridine(55) in tRNA = pseudouridine(55) in tRNA. Its function is as follows. Responsible for synthesis of pseudouridine from uracil-55 in the psi GC loop of transfer RNAs. The polypeptide is tRNA pseudouridine synthase B (Sulfurimonas denitrificans (strain ATCC 33889 / DSM 1251) (Thiomicrospira denitrificans (strain ATCC 33889 / DSM 1251))).